We begin with the raw amino-acid sequence, 302 residues long: Ribosomal RNA small subunit methyltransferase A (302 aa).

S-adenosyl-L-methionine contacts are provided by His-15, Leu-17, Gly-42, Glu-64, Asp-89, and Asn-109. Residues 275 to 302 (DAASADGHDHGDGSGQGESSPGGARDQI) are disordered.

Belongs to the class I-like SAM-binding methyltransferase superfamily. rRNA adenine N(6)-methyltransferase family. RsmA subfamily.

The protein resides in the cytoplasm. The catalysed reaction is adenosine(1518)/adenosine(1519) in 16S rRNA + 4 S-adenosyl-L-methionine = N(6)-dimethyladenosine(1518)/N(6)-dimethyladenosine(1519) in 16S rRNA + 4 S-adenosyl-L-homocysteine + 4 H(+). Its function is as follows. Specifically dimethylates two adjacent adenosines (A1518 and A1519) in the loop of a conserved hairpin near the 3'-end of 16S rRNA in the 30S particle. May play a critical role in biogenesis of 30S subunits. In Parasynechococcus marenigrum (strain WH8102), this protein is Ribosomal RNA small subunit methyltransferase A.